The chain runs to 470 residues: 3-isopropylmalate dehydratase large subunit (470 aa).

[4Fe-4S] cluster contacts are provided by Cys-348, Cys-409, and Cys-412.

This sequence belongs to the aconitase/IPM isomerase family. LeuC type 1 subfamily. Heterodimer of LeuC and LeuD. The cofactor is [4Fe-4S] cluster.

It catalyses the reaction (2R,3S)-3-isopropylmalate = (2S)-2-isopropylmalate. Its pathway is amino-acid biosynthesis; L-leucine biosynthesis; L-leucine from 3-methyl-2-oxobutanoate: step 2/4. In terms of biological role, catalyzes the isomerization between 2-isopropylmalate and 3-isopropylmalate, via the formation of 2-isopropylmaleate. The polypeptide is 3-isopropylmalate dehydratase large subunit (Thioalkalivibrio sulfidiphilus (strain HL-EbGR7)).